Reading from the N-terminus, the 366-residue chain is Protein FAM110B (366 aa).

Disordered stretches follow at residues 127–150 (SSEGSSSGSGHKHSSRNWPPHRDT), 163–182 (KVYPTPGRGSPQESSSHVSR), and 214–253 (IPCSSSAPPLPPKPKVAAMKSPDADQVEPACGVSRRPSLQ). 2 positions are modified to phosphoserine: serine 234 and serine 297. The interval 313–333 (DCEQSQDSNSDLRNDDSANDR) is disordered. The span at 322-331 (SDLRNDDSAN) shows a compositional bias: basic and acidic residues.

The protein belongs to the FAM110 family.

It localises to the cytoplasm. It is found in the cytoskeleton. Its subcellular location is the microtubule organizing center. The protein resides in the centrosome. The sequence is that of Protein FAM110B (Fam110b) from Rattus norvegicus (Rat).